A 125-amino-acid chain; its full sequence is MLSKTGLIGALVRRSFGTSQMLRETIKNHEPNNLERRMLVWTGKYKSQSEIPNFVSQDVMERCRNKMRIRLANIMIALTAVGCAIMVYSGKQAAKKGESVTKMNLEWHKQFNDSQQSEGSAPAAK.

The chain crosses the membrane as a helical span at residues 69 to 88 (IRLANIMIALTAVGCAIMVY). N-linked (GlcNAc...) asparagine glycosylation occurs at Asn-112.

This sequence belongs to the UPF0389 family.

It is found in the membrane. The chain is UPF0389 protein CG9231 from Drosophila melanogaster (Fruit fly).